The sequence spans 445 residues: Phosphoglucosamine mutase (445 aa).

The Phosphoserine intermediate role is filled by Ser-102. Mg(2+)-binding residues include Ser-102, Asp-241, Asp-243, and Asp-245. Ser-102 is subject to Phosphoserine.

Belongs to the phosphohexose mutase family. Mg(2+) serves as cofactor. Post-translationally, activated by phosphorylation.

The enzyme catalyses alpha-D-glucosamine 1-phosphate = D-glucosamine 6-phosphate. Catalyzes the conversion of glucosamine-6-phosphate to glucosamine-1-phosphate. The sequence is that of Phosphoglucosamine mutase from Shewanella pealeana (strain ATCC 700345 / ANG-SQ1).